The chain runs to 113 residues: ATP-dependent Clp protease adapter protein ClpS (113 aa).

A disordered region spans residues 1–26; that stretch reads MLMQPLMMSDNPDDESDLGLLTKTRP.

It belongs to the ClpS family. Binds to the N-terminal domain of the chaperone ClpA.

Its function is as follows. Involved in the modulation of the specificity of the ClpAP-mediated ATP-dependent protein degradation. This is ATP-dependent Clp protease adapter protein ClpS from Ruegeria sp. (strain TM1040) (Silicibacter sp.).